Consider the following 62-residue polypeptide: Trypsin inhibitor MCI-3 (62 aa).

The protein belongs to the protease inhibitor I13 (potato type I serine protease inhibitor) family.

The protein is Trypsin inhibitor MCI-3 of Momordica charantia (Bitter gourd).